The chain runs to 554 residues: Suppressor of hairless homolog (554 aa).

The tract at residues 1–31 (MYHPHHLPAHGQVQSHQHREDAAATSSRDVN) is disordered. 3 DNA-binding regions span residues 83–90 (KSYGNEKR), 218–227 (RLRSQTVSTR), and 291–323 (RKVDKQTAILDADDPVSQLHKCAFYLKDTERMY). In terms of domain architecture, IPT/TIG spans 381–471 (PNVHSLQLNG…YPTNLTFTFT (91 aa)). The disordered stretch occupies residues 489 to 554 (GSKRPSASMP…NGANMLRTAS (66 aa)). Basic and acidic residues predominate over residues 508–519 (DSGRGNESDRGD).

Belongs to the Su(H) family. As to quaternary structure, interacts with activated Notch proteins.

Its subcellular location is the nucleus. Its function is as follows. Transcriptional regulator that plays a central role in Notch signaling, a signaling pathway involved in cell-cell communication that regulates a broad spectrum of cell-fate determinations. Acts as a transcriptional repressor when it is not associated with Notch proteins. When associated with some Notch protein, it acts as a transcriptional activator that activates transcription of Notch target genes. Required for the transcriptional expression of Brachyury, suggesting that it participates in notochord differentiation. The protein is Suppressor of hairless homolog (Su(H)) of Ciona intestinalis (Transparent sea squirt).